Reading from the N-terminus, the 1070-residue chain is DNA-directed RNA polymerase subunit beta (1070 aa).

Belongs to the RNA polymerase beta chain family. In plastids the minimal PEP RNA polymerase catalytic core is composed of four subunits: alpha, beta, beta', and beta''. When a (nuclear-encoded) sigma factor is associated with the core the holoenzyme is formed, which can initiate transcription.

The protein localises to the plastid. It is found in the chloroplast. It carries out the reaction RNA(n) + a ribonucleoside 5'-triphosphate = RNA(n+1) + diphosphate. DNA-dependent RNA polymerase catalyzes the transcription of DNA into RNA using the four ribonucleoside triphosphates as substrates. This Spinacia oleracea (Spinach) protein is DNA-directed RNA polymerase subunit beta.